The chain runs to 355 residues: Guanine nucleotide-binding protein subunit beta-5a (355 aa).

The interval 1–23 (MAAQEEPAQPGDSLATLKSESDT) is disordered. WD repeat units follow at residues 63-102 (GHGN…KEHA), 105-144 (MPCT…NENL), 153-194 (MHTN…QSFH), 195-238 (GHAA…QSFE), 239-278 (SHDS…EVAI), 280-322 (SKES…RVSI), and 325-355 (GHEN…RIWA).

Belongs to the WD repeat G protein beta family. May interact with RGS9; this interaction stabilizes both proteins and increases RGS9 GTPase-activating protein (GAP) activity, hence accelerating the deactivation of D(2) dopamine receptor-mediated signaling.

The protein resides in the membrane. Enhances GTPase-activating protein (GAP) activity of regulator of G protein signaling (RGS) proteins, such as RGS7 and RGS9, hence involved in the termination of the signaling initiated by the G protein coupled receptors (GPCRs) by accelerating the GTP hydrolysis on the G-alpha subunits, thereby promoting their inactivation. Increases RGS7 GTPase-activating protein (GAP) activity, thereby regulating mood and cognition. Increases RGS9 GTPase-activating protein (GAP) activity, hence contributes to the deactivation of G protein signaling initiated by D(2) dopamine receptors. Along with gnb5b, plays an important role in neuronal signaling, including in the parasympathetic, but not sympathetic, control of heart rate. This is Guanine nucleotide-binding protein subunit beta-5a from Danio rerio (Zebrafish).